The chain runs to 490 residues: Betaine aldehyde dehydrogenase (490 aa).

D93 lines the K(+) pocket. Residue 150 to 152 (GAW) participates in NAD(+) binding. The active-site Charge relay system is K162. 176 to 179 (KPSE) contacts NAD(+). V180 serves as a coordination point for K(+). Residue 230-233 (GIAS) coordinates NAD(+). L246 contacts K(+). E252 functions as the Proton acceptor in the catalytic mechanism. The NAD(+) site is built by G254, C286, and E387. C286 functions as the Nucleophile in the catalytic mechanism. The residue at position 286 (C286) is a Cysteine sulfenic acid (-SOH). K(+)-binding residues include K457 and G460. E464 serves as the catalytic Charge relay system.

It belongs to the aldehyde dehydrogenase family. In terms of assembly, dimer of dimers. K(+) serves as cofactor.

The catalysed reaction is betaine aldehyde + NAD(+) + H2O = glycine betaine + NADH + 2 H(+). Its pathway is amine and polyamine biosynthesis; betaine biosynthesis via choline pathway; betaine from betaine aldehyde: step 1/1. Functionally, involved in the biosynthesis of the osmoprotectant glycine betaine. Catalyzes the irreversible oxidation of betaine aldehyde to the corresponding acid. The chain is Betaine aldehyde dehydrogenase from Yersinia pseudotuberculosis serotype I (strain IP32953).